The chain runs to 128 residues: Keratin-associated protein 2-1 (128 aa).

A 10 X 5 AA repeats of C-C-[CDPQRWG]-[APRS]-[CIPSTVD] region spans residues 5–112 (CCGSTFSSLS…SVQSPCCRPP (108 aa)).

This sequence belongs to the KRTAP type 2 family. Interacts with hair keratins.

Functionally, in the hair cortex, hair keratin intermediate filaments are embedded in an interfilamentous matrix, consisting of hair keratin-associated proteins (KRTAP), which are essential for the formation of a rigid and resistant hair shaft through their extensive disulfide bond cross-linking with abundant cysteine residues of hair keratins. The matrix proteins include the high-sulfur and high-glycine-tyrosine keratins. This chain is Keratin-associated protein 2-1 (KRTAP2-1), found in Homo sapiens (Human).